Consider the following 246-residue polypeptide: NAD-dependent protein deacetylase (246 aa).

A Deacetylase sirtuin-type domain is found at 1–246 (MKKPDIQQLK…VIEEIVNSNS (246 aa)). 7 residues coordinate NAD(+): Ala-25, Phe-36, Arg-37, Gln-106, Ile-108, Asp-109, and His-124. Residue Phe-36 coordinates nicotinamide. Residues Ile-108 and Asp-109 each contribute to the nicotinamide site. Residue His-124 is the Proton acceptor of the active site. Positions 132, 135, 152, and 155 each coordinate Zn(2+). NAD(+) contacts are provided by Ser-193, Ser-194, Asn-216, and Asp-233.

Belongs to the sirtuin family. Class U subfamily. It depends on Zn(2+) as a cofactor.

It localises to the cytoplasm. The catalysed reaction is N(6)-acetyl-L-lysyl-[protein] + NAD(+) + H2O = 2''-O-acetyl-ADP-D-ribose + nicotinamide + L-lysyl-[protein]. Functionally, NAD-dependent protein deacetylase which modulates the activities of several enzymes which are inactive in their acetylated form. The protein is NAD-dependent protein deacetylase of Staphylococcus epidermidis (strain ATCC 35984 / DSM 28319 / BCRC 17069 / CCUG 31568 / BM 3577 / RP62A).